The following is an 817-amino-acid chain: Two pore calcium channel protein 1 (817 aa).

Topologically, residues M1–Y101 are cytoplasmic. The disordered stretch occupies residues P22 to H66. Residues L102–L122 traverse the membrane as a helical segment. Residues L123–R137 are Extracellular-facing. Residues T138–M158 traverse the membrane as a helical segment. Topologically, residues K159 to K172 are cytoplasmic. The chain crosses the membrane as a helical span at residues R173–V193. Topologically, residues R194–T202 are extracellular. Residues R203 to R221 traverse the membrane as a helical segment. Residues N222–D235 lie on the Cytoplasmic side of the membrane. Residues I236–S256 traverse the membrane as a helical segment. Residues T257–Y263 lie on the Extracellular side of the membrane. Positions F264–M287 form an intramembrane region, helical; Pore-forming. Topologically, residues M288–C298 are extracellular. A helical membrane pass occupies residues V299–V319. Residues V320 to Q445 lie on the Cytoplasmic side of the membrane. The chain crosses the membrane as a helical span at residues Y446–L466. The Extracellular segment spans residues K467–Y480. A helical membrane pass occupies residues L481 to V501. The Cytoplasmic portion of the chain corresponds to E502–L504. The helical transmembrane segment at S505–T527 threads the bilayer. At L528–F535 the chain is on the extracellular side. The helical transmembrane segment at I536–L550 threads the bilayer. Topologically, residues K551–T574 are cytoplasmic. The helical transmembrane segment at L575 to S595 threads the bilayer. Residues P596–N630 are Extracellular-facing. The helical; Pore-forming intramembrane region spans F631–M654. The Extracellular portion of the chain corresponds to E655–T671. The chain crosses the membrane as a helical span at residues F672–V692. Over F693–T817 the chain is Cytoplasmic. The stretch at S770–L794 forms a coiled coil. Residues H785–T817 form a disordered region. Polar residues predominate over residues A802–T817.

This sequence belongs to the calcium channel alpha-1 subunit (TC 1.A.1.11) family. Two pore calcium channel subfamily. In terms of assembly, dimer. Interacts with MTOR; the interaction is required for TPCN1 ATP sensitivity. Interacts with STX7, STX8 and STX12. Interacts with JPT2. Found in a complex with LSM12, TPCN1 and TPCN2. N-glycosylated. As to expression, widely expressed. Expressed at relatively high level in kidney, liver and lung, and in the kidney it is expressed at inner medullary collecting ducts.

The protein localises to the lysosome membrane. It is found in the endosome membrane. The protein resides in the early endosome membrane. Its subcellular location is the recycling endosome membrane. The enzyme catalyses Na(+)(in) = Na(+)(out). It catalyses the reaction Ca(2+)(in) = Ca(2+)(out). With respect to regulation, na(+) current is inhibited by ATP in a MTORC-dependent manner. ATP sensitivity is independent of PI(3,5)P2. Probably regulated by Mg(2+) ions, cytosolic Mg(2+) selectively inhibits outward current while lysosomal Mg(2+) modestly inhibits both the outward and inward currents. In the absence of Mg(2+), NAADP readily activates TPCN2, with properties similar to PI(3,5)P2. Both current elicited by PI(3,5)P2 as well as NAADP are inhibited by tetrandrine. Functionally, intracellular channel initially characterized as a non-selective Ca(2+)-permeable channel activated by NAADP (nicotinic acid adenine dinucleotide phosphate), it is also a voltage-gated highly-selective Na(+) channel activated directly by PI(3,5)P2 (phosphatidylinositol 3,5-bisphosphate) that senses pH changes and confers electrical excitability to organelles. Localizes to the early and recycling endosomes membranes where it plays a role in the uptake and processing of proteins and regulates organellar membrane excitability, membrane trafficking and pH homeostasis. Ion selectivity is not fixed but rather agonist-dependent and under defined ionic conditions, can be readily activated by both NAADP and PI(3,5)P2. Required for mTOR-dependent nutrient sensing. This is Two pore calcium channel protein 1 (Tpcn1) from Rattus norvegicus (Rat).